Consider the following 1171-residue polypeptide: ATP-dependent helicase/deoxyribonuclease subunit B (1171 aa).

The region spanning 1–390 (MSLRFVIGRA…HPLVECIRSA (390 aa)) is the UvrD-like helicase ATP-binding domain. An ATP-binding site is contributed by 8-15 (GRAGSGKS). One can recognise a UvrD-like helicase C-terminal domain in the interval 281 to 587 (MEQPRFHSPA…QFANIPPSLD (307 aa)). [4Fe-4S] cluster is bound by residues cysteine 805, cysteine 1129, cysteine 1132, and cysteine 1138.

It belongs to the helicase family. AddB/RexB type 1 subfamily. Heterodimer of AddA and AddB. Mg(2+) is required as a cofactor. [4Fe-4S] cluster serves as cofactor.

The heterodimer acts as both an ATP-dependent DNA helicase and an ATP-dependent, dual-direction single-stranded exonuclease. Recognizes the chi site generating a DNA molecule suitable for the initiation of homologous recombination. The AddB subunit has 5' -&gt; 3' nuclease activity but not helicase activity. The protein is ATP-dependent helicase/deoxyribonuclease subunit B of Bacillus cereus (strain ATCC 14579 / DSM 31 / CCUG 7414 / JCM 2152 / NBRC 15305 / NCIMB 9373 / NCTC 2599 / NRRL B-3711).